Reading from the N-terminus, the 190-residue chain is MLSCLSKPALRCRSVNRLQFLRKLSLQEIQTLKTQHQYLGRTRLDVETPSLKPSAAGSGSTAPKPVTEREIASTRFMPRKNVIKLTPLAVEHLKKMQSSASMKGKMLRIGVKQKGCAGQAYSLEYIEKPDKFDEIVKQDGISIIVARRALLQIIGSVMDYRDDDLQSRFIFSNPNVKSTCGCGESFSTLK.

The interval 49–71 is disordered; the sequence is PSLKPSAAGSGSTAPKPVTEREI. Fe cation contacts are provided by Cys-116, Cys-180, and Cys-182.

Belongs to the HesB/IscA family.

The protein localises to the mitochondrion matrix. Involved in the assembly of mitochondrial and cytoplasmic iron-sulfur proteins. Probably involved in the binding of an intermediate of Fe/S cluster assembly. The sequence is that of Iron-sulfur assembly protein 1 (isa1) from Schizosaccharomyces pombe (strain 972 / ATCC 24843) (Fission yeast).